A 227-amino-acid chain; its full sequence is Small ribosomal subunit protein uS5 (227 aa).

The interval 1 to 22 (MSKRSNRSNNKNNTNKFNIENW) is disordered. Residues 7–18 (RSNNKNNTNKFN) are compositionally biased toward low complexity. The S5 DRBM domain maps to 63-126 (LEEEVMDVNL…DAAKYNLIKV (64 aa)).

This sequence belongs to the universal ribosomal protein uS5 family. Part of the 30S ribosomal subunit. Contacts protein S4.

In terms of biological role, with S4 and S12 plays an important role in translational accuracy. This is Small ribosomal subunit protein uS5 from Methanosphaera stadtmanae (strain ATCC 43021 / DSM 3091 / JCM 11832 / MCB-3).